Reading from the N-terminus, the 718-residue chain is Polyribonucleotide nucleotidyltransferase (718 aa).

Aspartate 487 and aspartate 493 together coordinate Mg(2+). In terms of domain architecture, KH spans 554-613 (PRIETFKIPTDKIREVIGTGGKVIREIVEKTGAKVNIEDDGTVKVASSDGESIKAAIKWI). Residues 623–691 (GEIYEGTVVK…DRGKTRLSMK (69 aa)) enclose the S1 motif domain. Residues 692 to 718 (VVDQETGEDLEAKQKAEGDAPREAAGE) are disordered. Residues 701–718 (LEAKQKAEGDAPREAAGE) show a composition bias toward basic and acidic residues.

This sequence belongs to the polyribonucleotide nucleotidyltransferase family. The cofactor is Mg(2+).

It is found in the cytoplasm. The catalysed reaction is RNA(n+1) + phosphate = RNA(n) + a ribonucleoside 5'-diphosphate. In terms of biological role, involved in mRNA degradation. Catalyzes the phosphorolysis of single-stranded polyribonucleotides processively in the 3'- to 5'-direction. The protein is Polyribonucleotide nucleotidyltransferase of Nitrobacter winogradskyi (strain ATCC 25391 / DSM 10237 / CIP 104748 / NCIMB 11846 / Nb-255).